We begin with the raw amino-acid sequence, 458 residues long: Ribulose bisphosphate carboxylase (458 aa).

Asn111 lines the substrate pocket. Lys166 acts as the Proton acceptor in catalysis. Position 168 (Lys168) interacts with substrate. Mg(2+) contacts are provided by Lys191, Asp193, and Glu194. N6-carboxylysine is present on Lys191. The Proton acceptor role is filled by His287. Substrate contacts are provided by Arg288, His321, and Ser368.

The protein belongs to the RuBisCO large chain family. Type II subfamily. As to quaternary structure, homodimer. Mg(2+) is required as a cofactor.

The enzyme catalyses 2 (2R)-3-phosphoglycerate + 2 H(+) = D-ribulose 1,5-bisphosphate + CO2 + H2O. The catalysed reaction is D-ribulose 1,5-bisphosphate + O2 = 2-phosphoglycolate + (2R)-3-phosphoglycerate + 2 H(+). Its function is as follows. RuBisCO catalyzes two reactions: the carboxylation of D-ribulose 1,5-bisphosphate, the primary event in carbon dioxide fixation, as well as the oxidative fragmentation of the pentose substrate. Both reactions occur simultaneously and in competition at the same active site. This chain is Ribulose bisphosphate carboxylase (cbbM), found in Rhodobacter capsulatus (Rhodopseudomonas capsulata).